A 100-amino-acid chain; its full sequence is Large ribosomal subunit protein uL23 (100 aa).

It belongs to the universal ribosomal protein uL23 family. As to quaternary structure, part of the 50S ribosomal subunit. Contacts protein L29, and trigger factor when it is bound to the ribosome.

In terms of biological role, one of the early assembly proteins it binds 23S rRNA. One of the proteins that surrounds the polypeptide exit tunnel on the outside of the ribosome. Forms the main docking site for trigger factor binding to the ribosome. This chain is Large ribosomal subunit protein uL23, found in Shewanella amazonensis (strain ATCC BAA-1098 / SB2B).